Reading from the N-terminus, the 217-residue chain is Melanocortin-2 receptor accessory protein 2A (217 aa).

Residue Asn-8 is glycosylated (N-linked (GlcNAc...) asparagine). A helical transmembrane segment spans residues 42-62 (IVIGFWVGLAVFVIFMFFVLT).

It belongs to the MRAP family. In terms of assembly, interacts with mc4r.

The protein resides in the cell membrane. It localises to the endoplasmic reticulum membrane. In terms of biological role, inhibitor of melanocortin receptor 4 (mc4r), a receptor involved in energy homeostasis. Plays a role during larval development in the control of energy homeostasis and body weight regulation by decreasing ligand-sensitivity of mc4r and mc4r-mediated generation of cAMP, leading to stimulate growth during larval development. Acts by stabilizing an inactive conformation of mc4r during embryonic development, when all the energy consumed is obtained from the yolk sac, possibly to speed the rapid maturation to the mobile free-feeding juvenile stage reached at 5 dpf. The polypeptide is Melanocortin-2 receptor accessory protein 2A (mrap2a) (Danio rerio (Zebrafish)).